The following is a 395-amino-acid chain: Calcium sensing receptor, chloroplastic (395 aa).

Residues 1–12 show a composition bias toward low complexity; sequence MAPVPVSVSATL. The segment at 1 to 27 is disordered; the sequence is MAPVPVSVSATLAPPPAAPPKTTSRSW. A chloroplast-targeting transit peptide spans 1–39; that stretch reads MAPVPVSVSATLAPPPAAPPKTTSRSWERRAPADAAFAA. Residues 40–182 are Lumenal, thylakoid-facing; it reads ASSVAGSAAL…TITSLGPEDY (143 aa). Residues 183–203 form a helical membrane-spanning segment; sequence VVAAGXAFLAYLLVPPVWSLV. The Stromal segment spans residues 204–395; sequence SSSLRGYKGD…TRKLLPGGVD (192 aa). Residues 224–345 form the Rhodanese domain; sequence TTQGYVLIDV…WAQSRLGTDS (122 aa). Thr-377 bears the Phosphothreonine mark.

In terms of processing, phosphorylated in both bundle sheath and mesophyll cells, under both low and high light regimes (70 vs 900 umol photons/m-2/s).

It localises to the plastid. The protein resides in the chloroplast thylakoid membrane. Functionally, modulates cytoplasmic Ca(2+) concentration and is crucial for proper stomatal regulation in response to elevated levels of external Ca(2+). May function by regulating concentrations of inositol 1,4,5-trisphosphate (IP3), which in turn triggers release of Ca(2+) from internal stores. May play a role in de-etiolation. This is Calcium sensing receptor, chloroplastic from Zea mays (Maize).